A 68-amino-acid chain; its full sequence is MPQLDTSTWFTTILSMFLTLFIIFQLKISKHTYHPNPETTLPMTQKQPTPWETKWTKIYSPLSLPLQS.

The chain crosses the membrane as a helical span at residues 8 to 24; sequence TWFTTILSMFLTLFIIF. K54 is subject to N6-acetyllysine; alternate. K54 carries the post-translational modification N6-succinyllysine; alternate. K57 is subject to N6-acetyllysine.

Belongs to the ATPase protein 8 family. In terms of assembly, component of the ATP synthase complex composed at least of ATP5F1A/subunit alpha, ATP5F1B/subunit beta, ATP5MC1/subunit c (homooctomer), MT-ATP6/subunit a, MT-ATP8/subunit 8, ATP5ME/subunit e, ATP5MF/subunit f, ATP5MG/subunit g, ATP5MK/subunit k, ATP5MJ/subunit j, ATP5F1C/subunit gamma, ATP5F1D/subunit delta, ATP5F1E/subunit epsilon, ATP5PF/subunit F6, ATP5PB/subunit b, ATP5PD/subunit d, ATP5PO/subunit OSCP. ATP synthase complex consists of a soluble F(1) head domain (subunits alpha(3) and beta(3)) - the catalytic core - and a membrane F(0) domain - the membrane proton channel (subunits c, a, 8, e, f, g, k and j). These two domains are linked by a central stalk (subunits gamma, delta, and epsilon) rotating inside the F1 region and a stationary peripheral stalk (subunits F6, b, d, and OSCP). Interacts with PRICKLE3.

The protein localises to the mitochondrion membrane. Functionally, subunit 8, of the mitochondrial membrane ATP synthase complex (F(1)F(0) ATP synthase or Complex V) that produces ATP from ADP in the presence of a proton gradient across the membrane which is generated by electron transport complexes of the respiratory chain. ATP synthase complex consist of a soluble F(1) head domain - the catalytic core - and a membrane F(1) domain - the membrane proton channel. These two domains are linked by a central stalk rotating inside the F(1) region and a stationary peripheral stalk. During catalysis, ATP synthesis in the catalytic domain of F(1) is coupled via a rotary mechanism of the central stalk subunits to proton translocation. In vivo, can only synthesize ATP although its ATP hydrolase activity can be activated artificially in vitro. Part of the complex F(0) domain. This is ATP synthase F(0) complex subunit 8 from Hippopotamus amphibius (Hippopotamus).